We begin with the raw amino-acid sequence, 506 residues long: Hexokinase-6 (506 aa).

The chain crosses the membrane as a helical span at residues 6-26 (VVGTAVVVCAAAAAAVGVAVV). The 455-residue stretch at 43–497 (RRAAAVIEEV…SGIGAALLAA (455 aa)) folds into the Hexokinase domain. The hexokinase small subdomain stretch occupies residues 98-236 (TGDEHGLFYA…GLDMKVTALV (139 aa)). ADP-binding residues include Gly112, Thr113, and Asn114. Positions 202, 203, 237, and 238 each coordinate D-glucose. The segment at 237 to 486 (NDTVGTLAGG…SSVVVKLAND (250 aa)) is hexokinase large subdomain. Thr261 serves as a coordination point for ADP. D-glucose contacts are provided by Asn264, Glu292, and Glu323. Position 451 (Gly451) interacts with ADP.

Belongs to the hexokinase family. Expressed in roots, leaves, flowers, immature seeds and endosperm.

It localises to the plastid. The protein localises to the chloroplast outer membrane. The enzyme catalyses a D-hexose + ATP = a D-hexose 6-phosphate + ADP + H(+). It carries out the reaction D-fructose + ATP = D-fructose 6-phosphate + ADP + H(+). It catalyses the reaction D-glucose + ATP = D-glucose 6-phosphate + ADP + H(+). The protein operates within carbohydrate metabolism; hexose metabolism. It functions in the pathway carbohydrate degradation; glycolysis; D-glyceraldehyde 3-phosphate and glycerone phosphate from D-glucose: step 1/4. In terms of biological role, fructose and glucose phosphorylating enzyme. Functions as a glucose sensor for plant growth and photosynthesis. The protein is Hexokinase-6 (HXK6) of Oryza sativa subsp. japonica (Rice).